A 257-amino-acid polypeptide reads, in one-letter code: Fimbrial assembly protein, serogroup I (257 aa).

This chain is Fimbrial assembly protein, serogroup I (fimB), found in Dichelobacter nodosus (Bacteroides nodosus).